The primary structure comprises 268 residues: Fibroblast growth factor 5 (268 aa).

Residues 1–20 form the signal peptide; sequence MSLSFLLLLFFSHLILSAWA. The disordered stretch occupies residues 26–81; it reads LAPKGQPGPAATDRNPRGSSSRQSSSSAMSSSSASSSPAASLGSQGSGLEQSSFQW. Over residues 43-80 the composition is skewed to low complexity; sequence GSSSRQSSSSAMSSSSASSSPAASLGSQGSGLEQSSFQ. The N-linked (GlcNAc...) asparagine glycan is linked to N110. The segment at 233-255 is disordered; sequence VPEKKKPPSPIKPKIPLSAPRKN.

This sequence belongs to the heparin-binding growth factors family. Interacts with FGFR1 and FGFR2. Affinity between fibroblast growth factors (FGFs) and their receptors is increased by heparan sulfate glycosaminoglycans that function as coreceptors. As to expression, expressed in neonatal brain.

It is found in the secreted. Its function is as follows. Plays an important role in the regulation of cell proliferation and cell differentiation. Required for normal regulation of the hair growth cycle. Functions as an inhibitor of hair elongation by promoting progression from anagen, the growth phase of the hair follicle, into catagen the apoptosis-induced regression phase. In Homo sapiens (Human), this protein is Fibroblast growth factor 5 (FGF5).